The primary structure comprises 308 residues: Transaldolase (308 aa).

Catalysis depends on lysine 125, which acts as the Schiff-base intermediate with substrate.

It belongs to the transaldolase family. Type 1 subfamily. In terms of assembly, homodimer.

It localises to the cytoplasm. It carries out the reaction D-sedoheptulose 7-phosphate + D-glyceraldehyde 3-phosphate = D-erythrose 4-phosphate + beta-D-fructose 6-phosphate. The protein operates within carbohydrate degradation; pentose phosphate pathway; D-glyceraldehyde 3-phosphate and beta-D-fructose 6-phosphate from D-ribose 5-phosphate and D-xylulose 5-phosphate (non-oxidative stage): step 2/3. Transaldolase is important for the balance of metabolites in the pentose-phosphate pathway. The sequence is that of Transaldolase from Pseudomonas putida (strain ATCC 47054 / DSM 6125 / CFBP 8728 / NCIMB 11950 / KT2440).